The sequence spans 233 residues: Sugar fermentation stimulation protein homolog (233 aa).

It belongs to the SfsA family.

This is Sugar fermentation stimulation protein homolog from Acetivibrio thermocellus (strain ATCC 27405 / DSM 1237 / JCM 9322 / NBRC 103400 / NCIMB 10682 / NRRL B-4536 / VPI 7372) (Clostridium thermocellum).